The primary structure comprises 515 residues: MADKETMKNAIVADLTRIVIWKNMHKNSTDQSEKILLQAINLKSILHRSITGVLDSKNDYEGPAFLELKKLMSYLFAEKPGTGEKKEKDAETDALLHIAQYLRGSEWKKLTVDPANDNILPSQVKENPKKQPAKRKRSTSRPANEKPSAPENKQQEKGDIPDEDKQEQPVKKIRKNSTSAVDGKRKSQAERLAHIKELIEEGDNSKAIAQSHVYLGIKPDELKKLFLVKANTCSICHKPSKKLLNKGCCLFSVNICKKCIGDYMENLHSYMVAKKMGIKPIHCWACSTVQKYEDFIEDDNMFYKRFWYFLLVNGKIALPQTNKDKLRPVVDWLLACDKIDEEDKDKIRLYLPKSAAARKKARSTSTVIEKNVESETKQEETETITPKPAEDETPPMKEEVIEMKPPTPPEPVIKEEEEKVSEEPEIPPIKEIEDKVEPMVEDTPEEDKVAESMADFEPIDFSTMLDEDEKPQVNYYGSPIGHVSDDDDEIKEVAGGNAVQEADTESMDDFMDYFN.

3 disordered regions span residues 117 to 188 (DNIL…RKSQ), 362 to 453 (RSTS…AESM), and 496 to 515 (GNAV…DYFN). 3 stretches are compositionally biased toward basic and acidic residues: residues 370-380 (KNVESETKQEE), 388-402 (PAED…EVIE), and 428-438 (PIKEIEDKVEP). The span at 502-515 (ADTESMDDFMDYFN) shows a compositional bias: acidic residues.

This is an uncharacterized protein from Ostreid herpesvirus 1 (isolate France) (OsHV-1).